The primary structure comprises 819 residues: Ferric-pyoverdine 358 receptor (819 aa).

An N-terminal signal peptide occupies residues 1–47 (MSKPLPSALNPLAKALLIRHSLRPRHALSRIGMGLALSSALVFQVQA). The TonB box signature appears at 115 to 122 (NTVTVTAS). Positions 166 to 276 (SIRETPQTIT…PSAVVNVIRK (111 aa)) constitute a TBDR plug domain. The TBDR beta-barrel domain maps to 281 to 819 (EFKSHIQAGV…NATVTLRYDF (539 aa)). Positions 802–819 (YGHYGAPRNATVTLRYDF) match the TonB C-terminal box motif.

The protein belongs to the TonB-dependent receptor family.

It localises to the cell outer membrane. In terms of biological role, specific receptor for the siderophore ferric pyoverdine (pseudobactin) 358. The sequence is that of Ferric-pyoverdine 358 receptor (pupA) from Pseudomonas putida (Arthrobacter siderocapsulatus).